The primary structure comprises 114 residues: UPF0342 protein LCA_0622 (114 aa).

Belongs to the UPF0342 family.

This Latilactobacillus sakei subsp. sakei (strain 23K) (Lactobacillus sakei subsp. sakei) protein is UPF0342 protein LCA_0622.